The chain runs to 202 residues: MSGRSVRAETRSRAKDDIKKVMAAIEKVRKWEKKWVTVGDTSLRIFKWVPVTDSKEKEKSKSNNTAAREPNGFPSDASANSSLLLEFQDENSNQSSVSDVYQLKVDSSTNSSPSPQQSESLSPAHTSDFRTDDSQPPTLGQEILEEPSLPASEVADEPPTLTKEEPVPVETQTTEEEEDSGAPPLKRFCVDQPVVPQTTSES.

Residues 53 to 202 (DSKEKEKSKS…PVVPQTTSES (150 aa)) are disordered. Over residues 90 to 99 (ENSNQSSVSD) the composition is skewed to polar residues. Over residues 107–123 (SSTNSSPSPQQSESLSP) the composition is skewed to low complexity. Ser-114, Ser-118, Ser-120, Ser-122, Ser-127, Ser-148, and Ser-152 each carry phosphoserine.

The protein belongs to the BCL7 family.

In terms of biological role, positive regulator of apoptosis. Plays a role in the Wnt signaling pathway, negatively regulating the expression of Wnt signaling components CTNNB1 and HMGA1. Involved in cell cycle progression, maintenance of the nuclear structure and stem cell differentiation. May play a role in lung tumor development or progression. This chain is B-cell CLL/lymphoma 7 protein family member B (Bcl7b), found in Mus musculus (Mouse).